Here is a 140-residue protein sequence, read N- to C-terminus: Large ribosomal subunit protein uL16 (140 aa).

Residues 1 to 14 (MLMPKKVKHRKQMK) are compositionally biased toward basic residues. The tract at residues 1–20 (MLMPKKVKHRKQMKGRMSGT) is disordered.

The protein belongs to the universal ribosomal protein uL16 family. As to quaternary structure, part of the 50S ribosomal subunit.

Binds 23S rRNA and is also seen to make contacts with the A and possibly P site tRNAs. In Geotalea daltonii (strain DSM 22248 / JCM 15807 / FRC-32) (Geobacter daltonii), this protein is Large ribosomal subunit protein uL16.